The sequence spans 195 residues: Oocyte-secreted protein 3 (195 aa).

An N-terminal signal peptide occupies residues 1–21; the sequence is MKAFVASGLLLLIFGMWRCSG. Asn-102 is a glycosylation site (N-linked (GlcNAc...) asparagine).

It belongs to the PLAC1 family. Oocyte-specific.

It localises to the secreted. The sequence is that of Oocyte-secreted protein 3 from Mus musculus (Mouse).